A 444-amino-acid chain; its full sequence is Maltoporin (444 aa).

The N-terminal stretch at 1–24 (MITLRKVPLALAIAAGILSAQAGA) is a signal peptide.

It belongs to the porin LamB (TC 1.B.3) family. As to quaternary structure, homotrimer formed of three 18-stranded antiparallel beta-barrels, containing three independent channels.

Its subcellular location is the cell outer membrane. The catalysed reaction is beta-maltose(in) = beta-maltose(out). Functionally, involved in the transport of maltose and maltodextrins. The sequence is that of Maltoporin from Enterobacter sp. (strain 638).